Here is a 172-residue protein sequence, read N- to C-terminus: Adenine phosphoribosyltransferase (172 aa).

The protein belongs to the purine/pyrimidine phosphoribosyltransferase family. As to quaternary structure, homodimer.

It is found in the cytoplasm. The catalysed reaction is AMP + diphosphate = 5-phospho-alpha-D-ribose 1-diphosphate + adenine. The protein operates within purine metabolism; AMP biosynthesis via salvage pathway; AMP from adenine: step 1/1. Catalyzes a salvage reaction resulting in the formation of AMP, that is energically less costly than de novo synthesis. The chain is Adenine phosphoribosyltransferase from Parasynechococcus marenigrum (strain WH8102).